A 725-amino-acid polypeptide reads, in one-letter code: Probable dipeptidyl-peptidase 5 (725 aa).

An N-terminal signal peptide occupies residues 1–18 (MGALRWLSIAATASTALA). N-linked (GlcNAc...) asparagine glycans are attached at residues Asn75, Asn96, Asn153, Asn258, Asn383, and Asn453. The Charge relay system role is filled by Ser563. Asn610 carries N-linked (GlcNAc...) asparagine glycosylation. Residues Asp646 and His678 each act as charge relay system in the active site.

The protein belongs to the peptidase S9C family.

It is found in the secreted. In terms of biological role, extracellular dipeptidyl-peptidase which removes N-terminal dipeptides sequentially from polypeptides having unsubstituted N-termini. This chain is Probable dipeptidyl-peptidase 5 (dpp5), found in Aspergillus flavus (strain ATCC 200026 / FGSC A1120 / IAM 13836 / NRRL 3357 / JCM 12722 / SRRC 167).